Consider the following 420-residue polypeptide: Glycerol-3-phosphate dehydrogenase [NAD(+)] 2, chloroplastic (420 aa).

The transit peptide at 1-45 (MAASVQPACLDLHFSGKHPPLLKHNAIIVRCVSSPNVIPEADSIS) directs the protein to the chloroplast. NAD(+) is bound by residues 94–99 (GGGSFG), Phe-171, Lys-194, and Ala-228. Substrate is bound at residue Lys-194. Lys-279 acts as the Proton acceptor in catalysis. Positions 343 and 369 each coordinate NAD(+). Residue 343–344 (RN) coordinates substrate.

The protein belongs to the NAD-dependent glycerol-3-phosphate dehydrogenase family.

It is found in the plastid. It localises to the chloroplast. The enzyme catalyses sn-glycerol 3-phosphate + NAD(+) = dihydroxyacetone phosphate + NADH + H(+). It participates in membrane lipid metabolism; glycerophospholipid metabolism. In terms of biological role, required to supply glycerol-3-phosphate in the chloroplast for the synthesis of glycerolipids. Required for activation of systemic acquired resistance (SAR). Provision of glycerol-3-phosphate may be involved in generating lipid signals necessary for mediating defense responses and SAR. The protein is Glycerol-3-phosphate dehydrogenase [NAD(+)] 2, chloroplastic (GLY1) of Arabidopsis thaliana (Mouse-ear cress).